Consider the following 403-residue polypeptide: Pyruvate, phosphate dikinase regulatory protein 1, chloroplastic (403 aa).

A chloroplast-targeting transit peptide spans 1 to 86; sequence MALLSAMKLQ…NTTGPMRPIE (86 aa). The interval 1–108 is disordered; sequence MALLSAMKLQ…DVSSSSNGVS (108 aa). Low complexity-rich tracts occupy residues 17–26, 69–80, and 87–108; these read SSNLNPNSKP, STITNGSNNTTG, and SSSRTDVSTLDSDVSSSSNGVS. 269-276 contacts ADP; sequence GVSRTGKT.

The protein belongs to the pyruvate, phosphate/water dikinase regulatory protein family. PDRP subfamily. As to quaternary structure, interacts with PPDK1. As to expression, expressed in green tissues.

Its subcellular location is the plastid. The protein resides in the chloroplast stroma. It carries out the reaction N(tele)-phospho-L-histidyl/L-threonyl-[pyruvate, phosphate dikinase] + ADP = N(tele)-phospho-L-histidyl/O-phospho-L-threonyl-[pyruvate, phosphate dikinase] + AMP + H(+). It catalyses the reaction N(tele)-phospho-L-histidyl/O-phospho-L-threonyl-[pyruvate, phosphate dikinase] + phosphate + H(+) = N(tele)-phospho-L-histidyl/L-threonyl-[pyruvate, phosphate dikinase] + diphosphate. Its activity is regulated as follows. Regulated by light/dark exposure. Functionally, bifunctional serine/threonine kinase and phosphorylase involved in the dark/light-mediated regulation of PPDK by catalyzing its phosphorylation/dephosphorylation. Dark/light-induced changes in stromal concentrations of the competing ADP and Pi substrates govern the direction of the reaction. In the dark, phosphorylates the catalytic intermediate of PPDK (PPDK-HisP), inactivating it. Light exposure induces the phosphorolysis reaction that reactivates PPDK. Unlike the kinase function which can utilize either Thr or Ser as target, the phosphorylase function has a strict substrate requirement for threonyl phosphate. This is Pyruvate, phosphate dikinase regulatory protein 1, chloroplastic (RP1) from Arabidopsis thaliana (Mouse-ear cress).